The following is a 701-amino-acid chain: Elongation factor G (701 aa).

The tr-type G domain maps to 10 to 290 (AKVRNIGIMA…AVVDYLPSPL (281 aa)). GTP contacts are provided by residues 19–26 (AHIDAGKT), 83–87 (DTPGH), and 137–140 (NKMD).

Belongs to the TRAFAC class translation factor GTPase superfamily. Classic translation factor GTPase family. EF-G/EF-2 subfamily.

The protein resides in the cytoplasm. Functionally, catalyzes the GTP-dependent ribosomal translocation step during translation elongation. During this step, the ribosome changes from the pre-translocational (PRE) to the post-translocational (POST) state as the newly formed A-site-bound peptidyl-tRNA and P-site-bound deacylated tRNA move to the P and E sites, respectively. Catalyzes the coordinated movement of the two tRNA molecules, the mRNA and conformational changes in the ribosome. This chain is Elongation factor G, found in Tropheryma whipplei (strain TW08/27) (Whipple's bacillus).